Reading from the N-terminus, the 317-residue chain is MTDKLTSLRQITTVVADTGDIAAMKLYQPQDATTNPSIILNAAQIPEYRKLIDEAIAWAREQSSDHAQQIIDATDKLAVNIGLEILKLIPGRISTEVDARLSYDTVASVTKAKRLIKLYNEAGISNDRILIKLASTWQGIRAAEQLEKEGINCNLTLLFSFAQARACAEAGVFLISPFVGRILDWYKANGDQKEFAPSEDPGVVSVTEIYQYYKKHGYKTVVMGASFRNLGEIIELAGCDRLTIAPSLLKELAESEGPVERKLAYTGEIQAKPAPLTEAEFYWQHNQDPMAVDKLADGIRKFAIDQGKLEKMISDLL.

Lys-132 functions as the Schiff-base intermediate with substrate in the catalytic mechanism.

It belongs to the transaldolase family. Type 1 subfamily. As to quaternary structure, homodimer.

It localises to the cytoplasm. The enzyme catalyses D-sedoheptulose 7-phosphate + D-glyceraldehyde 3-phosphate = D-erythrose 4-phosphate + beta-D-fructose 6-phosphate. The protein operates within carbohydrate degradation; pentose phosphate pathway; D-glyceraldehyde 3-phosphate and beta-D-fructose 6-phosphate from D-ribose 5-phosphate and D-xylulose 5-phosphate (non-oxidative stage): step 2/3. Transaldolase is important for the balance of metabolites in the pentose-phosphate pathway. This is Transaldolase from Yersinia pseudotuberculosis serotype IB (strain PB1/+).